We begin with the raw amino-acid sequence, 234 residues long: Phosphoribosylformylglycinamidine synthase subunit PurQ (234 aa).

Residues 3–231 (AAVVVFPGSN…ALYLERRKDH (229 aa)) form the Glutamine amidotransferase type-1 domain. The Nucleophile role is filled by Cys-87. Residues His-200 and Glu-202 contribute to the active site.

In terms of assembly, part of the FGAM synthase complex composed of 1 PurL, 1 PurQ and 2 PurS subunits.

It localises to the cytoplasm. It catalyses the reaction N(2)-formyl-N(1)-(5-phospho-beta-D-ribosyl)glycinamide + L-glutamine + ATP + H2O = 2-formamido-N(1)-(5-O-phospho-beta-D-ribosyl)acetamidine + L-glutamate + ADP + phosphate + H(+). The enzyme catalyses L-glutamine + H2O = L-glutamate + NH4(+). Its pathway is purine metabolism; IMP biosynthesis via de novo pathway; 5-amino-1-(5-phospho-D-ribosyl)imidazole from N(2)-formyl-N(1)-(5-phospho-D-ribosyl)glycinamide: step 1/2. Functionally, part of the phosphoribosylformylglycinamidine synthase complex involved in the purines biosynthetic pathway. Catalyzes the ATP-dependent conversion of formylglycinamide ribonucleotide (FGAR) and glutamine to yield formylglycinamidine ribonucleotide (FGAM) and glutamate. The FGAM synthase complex is composed of three subunits. PurQ produces an ammonia molecule by converting glutamine to glutamate. PurL transfers the ammonia molecule to FGAR to form FGAM in an ATP-dependent manner. PurS interacts with PurQ and PurL and is thought to assist in the transfer of the ammonia molecule from PurQ to PurL. The sequence is that of Phosphoribosylformylglycinamidine synthase subunit PurQ from Pseudothermotoga lettingae (strain ATCC BAA-301 / DSM 14385 / NBRC 107922 / TMO) (Thermotoga lettingae).